The primary structure comprises 199 residues: MTVKLVLASKSPFRSALLKNAGIEFSTASADIDERAVEAPLYESGATPEDVAQILAEAKAIDVSEKNPGAVVIGCDQTLSLGDEIFHKPHDMEAARRQLQKISGKTHQLNSAVVLARDGKTLWRHVSIAHMTMRDLDAGFIGRYIGRVGDIALSSVGAYQVEGPGIQLFEKIDGDYFTIVGLPLLPLLAELRREKCIDG.

The active-site Proton acceptor is the D76.

Belongs to the Maf family. YceF subfamily. A divalent metal cation is required as a cofactor.

It is found in the cytoplasm. It carries out the reaction N(7)-methyl-GTP + H2O = N(7)-methyl-GMP + diphosphate + H(+). Nucleoside triphosphate pyrophosphatase that hydrolyzes 7-methyl-GTP (m(7)GTP). May have a dual role in cell division arrest and in preventing the incorporation of modified nucleotides into cellular nucleic acids. The chain is 7-methyl-GTP pyrophosphatase from Brucella abortus biovar 1 (strain 9-941).